We begin with the raw amino-acid sequence, 468 residues long: 6-phospho-beta-galactosidase (468 aa).

D-galactose 6-phosphate contacts are provided by Gln19, His116, Asn159, Glu160, and Asn297. Catalysis depends on Glu160, which acts as the Proton donor. Catalysis depends on Glu375, which acts as the Nucleophile. D-galactose 6-phosphate is bound by residues Ser428, Trp429, Lys435, and Tyr437.

The protein belongs to the glycosyl hydrolase 1 family.

It carries out the reaction a 6-phospho-beta-D-galactoside + H2O = D-galactose 6-phosphate + an alcohol. The protein operates within carbohydrate metabolism; lactose degradation; D-galactose 6-phosphate and beta-D-glucose from lactose 6-phosphate: step 1/1. This Streptococcus pyogenes serotype M4 (strain MGAS10750) protein is 6-phospho-beta-galactosidase.